Here is a 340-residue protein sequence, read N- to C-terminus: Probable dual-specificity RNA methyltransferase RlmN (340 aa).

The Proton acceptor role is filled by glutamate 91. The Radical SAM core domain maps to 97–326; it reads HSGRVTACIS…CEIRKEKGTD (230 aa). Cysteines 104 and 331 form a disulfide. Cysteine 111, cysteine 115, and cysteine 118 together coordinate [4Fe-4S] cluster. S-adenosyl-L-methionine is bound by residues 158–159, serine 190, 213–215, and asparagine 289; these read GE and SLH. The active-site S-methylcysteine intermediate is the cysteine 331.

The protein belongs to the radical SAM superfamily. RlmN family. It depends on [4Fe-4S] cluster as a cofactor.

Its subcellular location is the cytoplasm. The catalysed reaction is adenosine(2503) in 23S rRNA + 2 reduced [2Fe-2S]-[ferredoxin] + 2 S-adenosyl-L-methionine = 2-methyladenosine(2503) in 23S rRNA + 5'-deoxyadenosine + L-methionine + 2 oxidized [2Fe-2S]-[ferredoxin] + S-adenosyl-L-homocysteine. It catalyses the reaction adenosine(37) in tRNA + 2 reduced [2Fe-2S]-[ferredoxin] + 2 S-adenosyl-L-methionine = 2-methyladenosine(37) in tRNA + 5'-deoxyadenosine + L-methionine + 2 oxidized [2Fe-2S]-[ferredoxin] + S-adenosyl-L-homocysteine. Specifically methylates position 2 of adenine 2503 in 23S rRNA and position 2 of adenine 37 in tRNAs. This is Probable dual-specificity RNA methyltransferase RlmN from Thermosipho melanesiensis (strain DSM 12029 / CIP 104789 / BI429).